Here is a 486-residue protein sequence, read N- to C-terminus: Palmitoyltransferase pfa4 (486 aa).

Topologically, residues 1–15 (MTNLQTGPTTRGLQR) are cytoplasmic. Residues 16–36 (FAIPAVCGLIIFLGYYSQYLF) traverse the membrane as a helical segment. Residues 37 to 51 (NTSADLAPGPLTCRE) lie on the Lumenal side of the membrane. Residues 52–72 (SLIFNILLVCLWLTYYQACTV) traverse the membrane as a helical segment. Residues 73–146 (DPGQYKFPPK…NCVSLQTFPH (74 aa)) are Cytoplasmic-facing. Residues 81–91 (PKEKEDGDNNN) are compositionally biased toward basic and acidic residues. Residues 81–101 (PKEKEDGDNNNKRGGRGPQKA) are disordered. The DHHC domain occupies 102 to 152 (KWCKKCDAPKPPRAHHCRHCARCIPRMDHHCPWTGNCVSLQTFPHFLRFLV). Cysteine 132 serves as the catalytic S-palmitoyl cysteine intermediate. The chain crosses the membrane as a helical span at residues 147 to 166 (FLRFLVYTNAALVYFARLLW). Topologically, residues 167-178 (TRLYYGLWDQRH) are lumenal. A helical transmembrane segment spans residues 179–201 (VPAYLGPSVGALLGCTMLSIAWF). The Cytoplasmic portion of the chain corresponds to 202-486 (ATQFALMVLL…RKVKSNGVHE (285 aa)). Residues 314 to 420 (NDRVGMWPPP…QDGRAWMNSE (107 aa)) form a disordered region. Composition is skewed to basic and acidic residues over residues 324 to 333 (DPEKLRRERA) and 346 to 376 (LNTEKPEVDYYRSSEDMKTAFKRRQQEDLRR). Residues 386–399 (EEDEIMAELEEDEG) show a composition bias toward acidic residues.

The protein belongs to the DHHC palmitoyltransferase family. PFA4 subfamily.

It localises to the endoplasmic reticulum membrane. It catalyses the reaction L-cysteinyl-[protein] + hexadecanoyl-CoA = S-hexadecanoyl-L-cysteinyl-[protein] + CoA. Mediates the reversible addition of palmitate to target proteins, thereby regulating their membrane association and biological function. In Neurospora crassa (strain ATCC 24698 / 74-OR23-1A / CBS 708.71 / DSM 1257 / FGSC 987), this protein is Palmitoyltransferase pfa4.